A 227-amino-acid polypeptide reads, in one-letter code: Cytochrome c oxidase subunit 2 (227 aa).

Residues 1-14 (MAHPMQLGFQDAAS) are Mitochondrial intermembrane-facing. Residues 15-45 (PIMEELLYFHDHTLMIVFMISSLVLYIISLM) traverse the membrane as a helical segment. Topologically, residues 46-59 (LSTELTHTSTMDAQ) are mitochondrial matrix. A helical membrane pass occupies residues 60-87 (EVETVWTILPAVILILIALPSLRILYMM). The Mitochondrial intermembrane portion of the chain corresponds to 88–227 (DEINTPSMTL…YFEEWLLKSL (140 aa)). Cu cation contacts are provided by His161, Cys196, Glu198, Cys200, His204, and Met207. Residue Glu198 participates in Mg(2+) binding. The residue at position 218 (Tyr218) is a Phosphotyrosine.

It belongs to the cytochrome c oxidase subunit 2 family. As to quaternary structure, component of the cytochrome c oxidase (complex IV, CIV), a multisubunit enzyme composed of 14 subunits. The complex is composed of a catalytic core of 3 subunits MT-CO1, MT-CO2 and MT-CO3, encoded in the mitochondrial DNA, and 11 supernumerary subunits COX4I, COX5A, COX5B, COX6A, COX6B, COX6C, COX7A, COX7B, COX7C, COX8 and NDUFA4, which are encoded in the nuclear genome. The complex exists as a monomer or a dimer and forms supercomplexes (SCs) in the inner mitochondrial membrane with NADH-ubiquinone oxidoreductase (complex I, CI) and ubiquinol-cytochrome c oxidoreductase (cytochrome b-c1 complex, complex III, CIII), resulting in different assemblies (supercomplex SCI(1)III(2)IV(1) and megacomplex MCI(2)III(2)IV(2)). Found in a complex with TMEM177, COA6, COX18, COX20, SCO1 and SCO2. Interacts with TMEM177 in a COX20-dependent manner. Interacts with COX20. Interacts with COX16. Cu cation is required as a cofactor.

It localises to the mitochondrion inner membrane. The catalysed reaction is 4 Fe(II)-[cytochrome c] + O2 + 8 H(+)(in) = 4 Fe(III)-[cytochrome c] + 2 H2O + 4 H(+)(out). Functionally, component of the cytochrome c oxidase, the last enzyme in the mitochondrial electron transport chain which drives oxidative phosphorylation. The respiratory chain contains 3 multisubunit complexes succinate dehydrogenase (complex II, CII), ubiquinol-cytochrome c oxidoreductase (cytochrome b-c1 complex, complex III, CIII) and cytochrome c oxidase (complex IV, CIV), that cooperate to transfer electrons derived from NADH and succinate to molecular oxygen, creating an electrochemical gradient over the inner membrane that drives transmembrane transport and the ATP synthase. Cytochrome c oxidase is the component of the respiratory chain that catalyzes the reduction of oxygen to water. Electrons originating from reduced cytochrome c in the intermembrane space (IMS) are transferred via the dinuclear copper A center (CU(A)) of subunit 2 and heme A of subunit 1 to the active site in subunit 1, a binuclear center (BNC) formed by heme A3 and copper B (CU(B)). The BNC reduces molecular oxygen to 2 water molecules using 4 electrons from cytochrome c in the IMS and 4 protons from the mitochondrial matrix. The sequence is that of Cytochrome c oxidase subunit 2 (MT-CO2) from Nycticebus coucang (Slow loris).